We begin with the raw amino-acid sequence, 525 residues long: Matrix extracellular phosphoglycoprotein (525 aa).

The N-terminal stretch at 1–17 (MRVFCVGLLLFSVTWAA) is a signal peptide. Disordered regions lie at residues 24–95 (TEKT…NRQR), 187–216 (AKAH…THRI), and 237–525 (EGSG…SDGD). Composition is skewed to basic and acidic residues over residues 25 to 46 (EKTK…DNIG) and 64 to 73 (IVQERKKDLS). Composition is skewed to polar residues over residues 75–95 (SEAS…NRQR) and 200–210 (DSQAQKSPVKS). The dentonin stretch occupies residues 242–264 (TDLQERGDNDISPFSGDGQPFKD). A Cell attachment site motif is present at residues 247–249 (RGD). Ser256 carries an O-linked (Xyl...) (chondroitin sulfate) serine glycan. Composition is skewed to basic and acidic residues over residues 292-312 (ESTH…REEN) and 319-328 (TRDETAKEAD). 2 N-linked (GlcNAc...) asparagine glycosylation sites follow: Asn477 and Asn478. The interval 507 to 525 (RDDSSESSDSGSSSESDGD) is ASARM motif; interaction with PHEX. Residues 513–525 (SSDSGSSSESDGD) are compositionally biased toward low complexity.

Belongs to the PF07175/osteoregulin family. As to quaternary structure, interacts (via the ASARM motif) with PHEX; the interaction is zinc-dependent. Post-translationally, phosphorylated on serine residues in the ASARM motif (in vitro) by FAM20C; the phosphorylation is important for the inhibition of bone mineralization. Cleaved by CTSB/cathepsin B; the cleavage is blocked by metalloprotease PHEX. As to expression, detected in urine (at protein level). Expressed by osteoblasts. Expressed by stem cells in dental pulp. Expressed by mesenchymal cells in dental papilla and dental pulp. Expressed in teeth, specifically in decidious dentin. Expressed in ondotoblasts. Expressed in salivary glands. Secreted from oncogenic hypophosphatemic tumors.

It localises to the secreted. The protein localises to the extracellular space. Its subcellular location is the extracellular matrix. Promotes renal phosphate excretion and inhibits intestinal phosphate absorption. Promotes bone mineralization by osteoblasts and cartilage mineralization by chondrocytes. Regulates the mineralization of the extracellular matrix of the craniofacial complex, such as teeth, bone and cartilage. Promotes dental pulp stem cell proliferation and differentiation. In Homo sapiens (Human), this protein is Matrix extracellular phosphoglycoprotein (MEPE).